Here is a 234-residue protein sequence, read N- to C-terminus: UPF0173 metal-dependent hydrolase Smed_0942 (234 aa).

It belongs to the UPF0173 family.

This is UPF0173 metal-dependent hydrolase Smed_0942 from Sinorhizobium medicae (strain WSM419) (Ensifer medicae).